The chain runs to 763 residues: MSELLSFALFLASVLIYAWKAGRNTWWFAATLTVLGLFVVLNITLFASDYFTGDGINDAVLYTLTNSLTGAGVSKYILPGIGIVLGLTAVFGALGWILRRRRRHPHHFGYSLLALLLALGSVDASPAFRQITELVKSQSRDGDPDFAAYYKEPSRTIPDPKLNLVYIYGESLERTYFDNEAFPDLTPELGALKNEGLDFSHTQQLPGTNYTIAGMVASQCGIPLFAPFEGNASASVSSFFPQNICLGDILKNSGYQNYFVQGANLRFAGKDVFLKSHGFDHLYGSEELKSVVADPHYRNDWGFYDDTVLDEAWKKFEELSRSGQRFSLFTLTVDTHHPDGFISRTCNRKKYDFDGKPNQSFSAVSCSQENIATFINKIKASPWFKDTVIVVSSDHLAMNNTAWKYLNKQDRNNLFFVIRGDKPQQETLAVKRNTMDNGATVLDILGGDNYLGLGRSSLSGQSMSEIFLNIKEKTLAWKPDIIRLWKFPKEMKEFTIDQQKNMIAFSGSHFRLPLLLRVSDKRVEPLPESEYSAPLRFQLADFAPRDNFVWVDRCYKMAQLWAPELALSTDWCVSQGQLGGQQIVQHVDKAIWKGKTAFKDTVIDMARYKGNVDTLKIVDNDIRYKADSFIFNVAGAPEEVKQFSGISRPESWGRWSNAQLGDEVKIEYKHPLPKKFDLVITAKAYGNNASRPIPVRVGNEEQTLVLGNEVTTTTLHFDNPTDADTLVIVPPEPVSTNEGNILGHSPRKLGIGMVEIKVVEREG.

The next 4 membrane-spanning stretches (helical) occupy residues 1 to 21 (MSEL…AWKA), 26 to 46 (WWFA…ITLF), 77 to 97 (ILPG…LGWI), and 108 to 128 (FGYS…SPAF).

The protein belongs to the OpgB family.

It is found in the cell inner membrane. It carries out the reaction a phosphatidylglycerol + a membrane-derived-oligosaccharide D-glucose = a 1,2-diacyl-sn-glycerol + a membrane-derived-oligosaccharide 6-(glycerophospho)-D-glucose.. It functions in the pathway glycan metabolism; osmoregulated periplasmic glucan (OPG) biosynthesis. In terms of biological role, transfers a phosphoglycerol residue from phosphatidylglycerol to the membrane-bound nascent glucan backbones. The chain is Phosphoglycerol transferase I from Escherichia coli O127:H6 (strain E2348/69 / EPEC).